The primary structure comprises 168 residues: UPF0304 protein MJECS11 (168 aa).

Belongs to the UPF0304 family.

This chain is UPF0304 protein MJECS11, found in Methanocaldococcus jannaschii (strain ATCC 43067 / DSM 2661 / JAL-1 / JCM 10045 / NBRC 100440) (Methanococcus jannaschii).